The primary structure comprises 206 residues: MAVVKVYDQDKKETGELTLAPEVFEVEVRPEILNLVVRAQRAAKRAGTHSVKTRSTISGGGAKPWRQKGTGRARSGSNRSPVWRGGAVVFGPQPRDYSFKVNKKVRKLALKMALSSRLAEENLMVVKGIELPEVKTKHMVKVAGALGLGKALVVTPEMDDKLVLSARNIPGITLMTPEQLSVFEILKHAQLVLLEGAVEPVQERLK.

Residues 44–80 form a disordered region; the sequence is KRAGTHSVKTRSTISGGGAKPWRQKGTGRARSGSNRS.

Belongs to the universal ribosomal protein uL4 family. As to quaternary structure, part of the 50S ribosomal subunit.

One of the primary rRNA binding proteins, this protein initially binds near the 5'-end of the 23S rRNA. It is important during the early stages of 50S assembly. It makes multiple contacts with different domains of the 23S rRNA in the assembled 50S subunit and ribosome. In terms of biological role, forms part of the polypeptide exit tunnel. The chain is Large ribosomal subunit protein uL4 from Oleidesulfovibrio alaskensis (strain ATCC BAA-1058 / DSM 17464 / G20) (Desulfovibrio alaskensis).